Consider the following 215-residue polypeptide: Protein-L-isoaspartate O-methyltransferase 1 (215 aa).

Ser-61 is a catalytic residue.

It belongs to the methyltransferase superfamily. L-isoaspartyl/D-aspartyl protein methyltransferase family.

The protein resides in the cytoplasm. The catalysed reaction is [protein]-L-isoaspartate + S-adenosyl-L-methionine = [protein]-L-isoaspartate alpha-methyl ester + S-adenosyl-L-homocysteine. Functionally, catalyzes the methyl esterification of L-isoaspartyl residues in peptides and proteins that result from spontaneous decomposition of normal L-aspartyl and L-asparaginyl residues. It plays a role in the repair and/or degradation of damaged proteins. In Pelobacter propionicus (strain DSM 2379 / NBRC 103807 / OttBd1), this protein is Protein-L-isoaspartate O-methyltransferase 1.